Reading from the N-terminus, the 724-residue chain is MALSSWSPELGLGSEKALPVAAVSTGPSLELCTFPSTLGSSVATDALEQLLVVEQSLQSDYFKCNEEAKNFLKDVAIAVKKLEEMRKSTIDLLEIESMELSRLYFVLETLPTSVSRELEECVRDARRVNLVEMSELHTKITRINDEIEFLKKKILHLQTDNTALGERQEELAKHYGKIVLSVNHAMKEKATTTIYINETYTKINLEKKELELQKTYIQEIEEQIERERAEYLKKKEKLNQEIEEYKKLCELKRKETYAKKKELDKLRLTMTKMRETVTTSTVVLSDHNLELARLQESIREWEHKIEDMKKSCKILEDKMLFFKNNREKLDDSSNFEKSELLLKIKQMTEKLHNCRLENKALREKLHTVSRQYKIVLNEEDKVFMQKRKIYSENQKQLAFIAQKENFLSKRKVDIKNMEEGLITLGELHRATKEVYRKQIKILNENMERETQRCIITQWKIACLRKKHARWVKKIKDEIKELIDKIQEAENRRSELIEETSIREHDINEFLAKIEQLTLELKQEEDAFVIKERKLIQELSKFEQRFAEEAQISKEKEVELDKCLPQLQVAEEEFTDKNRKFQNLIETVTAQKNEQNLLNNNISQFTRDFIRYINNTKKVKQELKQLREHESYKTKAHFEILKSLENEIYLHDLKTDALILENKRLKEYIAYLKDNIEQYERGGEDLVRSSSDLSCQLTDLQTQYSDLWAEFWTTLKKRRKRVLLK.

Coiled coils occupy residues 131–164, 203–256, 282–373, 426–534, and 565–627; these read VEMSELHTKITRINDEIEFLKKKILHLQTDNTAL, INLE…RKET, VVLS…RQYK, ELHR…ERKL, and QLQV…QLRE.

This Bos taurus (Bovine) protein is Coiled-coil domain-containing protein 175 (CCDC175).